The sequence spans 418 residues: Putative competence-damage inducible protein (418 aa).

The protein belongs to the CinA family.

This is Putative competence-damage inducible protein from Streptococcus gordonii (strain Challis / ATCC 35105 / BCRC 15272 / CH1 / DL1 / V288).